We begin with the raw amino-acid sequence, 285 residues long: Retron Ec67 DNA adenine methylase (285 aa).

S-adenosyl-L-methionine contacts are provided by Trp-7, Lys-11, Asp-51, and Asp-179.

Belongs to the N(4)/N(6)-methyltransferase family.

It carries out the reaction a 2'-deoxyadenosine in DNA + S-adenosyl-L-methionine = an N(6)-methyl-2'-deoxyadenosine in DNA + S-adenosyl-L-homocysteine + H(+). In terms of biological role, an alpha subtype methylase that recognizes the double-stranded sequence 5'-GATC-3' and methylates A-2 on both strands. May play a regulatory role in the functions of the retron. This Escherichia coli protein is Retron Ec67 DNA adenine methylase.